The primary structure comprises 216 residues: Peptide methionine sulfoxide reductase MsrA (216 aa).

Cys-54 is a catalytic residue.

This sequence belongs to the MsrA Met sulfoxide reductase family.

It catalyses the reaction L-methionyl-[protein] + [thioredoxin]-disulfide + H2O = L-methionyl-(S)-S-oxide-[protein] + [thioredoxin]-dithiol. The enzyme catalyses [thioredoxin]-disulfide + L-methionine + H2O = L-methionine (S)-S-oxide + [thioredoxin]-dithiol. In terms of biological role, has an important function as a repair enzyme for proteins that have been inactivated by oxidation. Catalyzes the reversible oxidation-reduction of methionine sulfoxide in proteins to methionine. The polypeptide is Peptide methionine sulfoxide reductase MsrA (Xanthomonas campestris pv. phaseoli).